The primary structure comprises 232 residues: Phosphatidylserine decarboxylase proenzyme (232 aa).

Catalysis depends on Ser-190, which acts as the Schiff-base intermediate with substrate; via pyruvic acid. At Ser-190 the chain carries Pyruvic acid (Ser); by autocatalysis.

The protein belongs to the phosphatidylserine decarboxylase family. PSD-A subfamily. Heterodimer of a large membrane-associated beta subunit and a small pyruvoyl-containing alpha subunit. Pyruvate serves as cofactor. In terms of processing, is synthesized initially as an inactive proenzyme. Formation of the active enzyme involves a self-maturation process in which the active site pyruvoyl group is generated from an internal serine residue via an autocatalytic post-translational modification. Two non-identical subunits are generated from the proenzyme in this reaction, and the pyruvate is formed at the N-terminus of the alpha chain, which is derived from the carboxyl end of the proenzyme. The post-translation cleavage follows an unusual pathway, termed non-hydrolytic serinolysis, in which the side chain hydroxyl group of the serine supplies its oxygen atom to form the C-terminus of the beta chain, while the remainder of the serine residue undergoes an oxidative deamination to produce ammonia and the pyruvoyl prosthetic group on the alpha chain.

It is found in the cell membrane. It carries out the reaction a 1,2-diacyl-sn-glycero-3-phospho-L-serine + H(+) = a 1,2-diacyl-sn-glycero-3-phosphoethanolamine + CO2. Its pathway is phospholipid metabolism; phosphatidylethanolamine biosynthesis; phosphatidylethanolamine from CDP-diacylglycerol: step 2/2. Its function is as follows. Catalyzes the formation of phosphatidylethanolamine (PtdEtn) from phosphatidylserine (PtdSer). This Rhizobium johnstonii (strain DSM 114642 / LMG 32736 / 3841) (Rhizobium leguminosarum bv. viciae) protein is Phosphatidylserine decarboxylase proenzyme.